Consider the following 232-residue polypeptide: Sugar fermentation stimulation protein homolog (232 aa).

Belongs to the SfsA family.

The chain is Sugar fermentation stimulation protein homolog from Geobacter metallireducens (strain ATCC 53774 / DSM 7210 / GS-15).